Reading from the N-terminus, the 513-residue chain is GMP synthase [glutamine-hydrolyzing] (513 aa).

Residues 8 to 198 (MILVLDFGSQ…VFGVCECVGE (191 aa)) form the Glutamine amidotransferase type-1 domain. Catalysis depends on Cys-85, which acts as the Nucleophile. Active-site residues include His-172 and Glu-174. In terms of domain architecture, GMPS ATP-PPase spans 199 to 388 (WSMENFIEIE…LGIPDEIVWR (190 aa)). Position 226-232 (226-232 (SGGVDSS)) interacts with ATP.

In terms of assembly, homodimer.

It catalyses the reaction XMP + L-glutamine + ATP + H2O = GMP + L-glutamate + AMP + diphosphate + 2 H(+). It functions in the pathway purine metabolism; GMP biosynthesis; GMP from XMP (L-Gln route): step 1/1. Functionally, catalyzes the synthesis of GMP from XMP. The protein is GMP synthase [glutamine-hydrolyzing] of Bacillus licheniformis (strain ATCC 14580 / DSM 13 / JCM 2505 / CCUG 7422 / NBRC 12200 / NCIMB 9375 / NCTC 10341 / NRRL NRS-1264 / Gibson 46).